The primary structure comprises 356 residues: Probable dual-specificity RNA methyltransferase RlmN (356 aa).

The Proton acceptor role is filled by Glu100. In terms of domain architecture, Radical SAM core spans 106-340; sequence TNSRLTTCVS…VSLRASRGLD (235 aa). Cys113 and Cys345 are joined by a disulfide. Cys120, Cys124, and Cys127 together coordinate [4Fe-4S] cluster. S-adenosyl-L-methionine contacts are provided by residues 167–168, Ser197, 226–228, and Asn302; these read GE and SLH. Cys345 acts as the S-methylcysteine intermediate in catalysis.

It belongs to the radical SAM superfamily. RlmN family. [4Fe-4S] cluster serves as cofactor.

It is found in the cytoplasm. It catalyses the reaction adenosine(2503) in 23S rRNA + 2 reduced [2Fe-2S]-[ferredoxin] + 2 S-adenosyl-L-methionine = 2-methyladenosine(2503) in 23S rRNA + 5'-deoxyadenosine + L-methionine + 2 oxidized [2Fe-2S]-[ferredoxin] + S-adenosyl-L-homocysteine. It carries out the reaction adenosine(37) in tRNA + 2 reduced [2Fe-2S]-[ferredoxin] + 2 S-adenosyl-L-methionine = 2-methyladenosine(37) in tRNA + 5'-deoxyadenosine + L-methionine + 2 oxidized [2Fe-2S]-[ferredoxin] + S-adenosyl-L-homocysteine. Its function is as follows. Specifically methylates position 2 of adenine 2503 in 23S rRNA and position 2 of adenine 37 in tRNAs. In Prochlorococcus marinus (strain MIT 9211), this protein is Probable dual-specificity RNA methyltransferase RlmN.